The chain runs to 1311 residues: MAEKTNGAAAPNGAADAPKSSPEQAQDVADVPVTDENGEQIPEDTVLSLTIVLPQNSEKIPIAVSPHEQVHEVRQSIIEMPNALQYSCFHLEHKGERINDFAQISEIKDIADGDEIHLVEDPYTEKEARIHLIRVRELIGAAGDRTDSVQGILPGLSVYDTVAAEARNATEVGEYEFNAGPNVKALLPKENDPQPKTVKAIQVSPWNPPPAHFRQKGHLLYLIITTNEGEQFQITGHVGGFFVNKSSNSKFDPLPRAGPKAYAAHSLLTLIEQLSPAFSKAFAELQEYTNQREPLSTFQITNAIPAAPWLVPSANSAACTHTPDITRTQESFLVSGVENTDTLRDWNEEFQSAKELPKDGVQDRVFRERLISKLFADYNDAAARGAVLVARGEVAPLNPTEGKDAQIFVYNNVFFSFGADGVGTFTSEGGDEAARVATAKDVSGVKLVNQLDIDGLYTPGTVVVDYLGKRIVGQSIVPGIFKQREPGENQIDYGAVDGKDLVATDERFVPQFQKLSKALKVKPHAVWDKEGKRHDLEGSVETKGLVGTDGRKYVLDLYRITPLDVSWQEEVEAESDAPEYPHRMTVLRPELVELFVRQKMREWVSSEVAKRGQAKKDQAAVEEKKEAKAESEEDSDSSSEEESSSDESDSEESSSDEDEEEEKKPKKKSVPKKAAKKEEVKEEKKDEKEASSDRIDVSDFSFTLNPDVFSGQVPQTDAEKEAMAADEKDVRDACEYLRKTAIPDLLNDLRESEISFPMDGQSLSRLLHKRGINLRYLGQIATASDGPRLQCLKEVSVREMIARGFKHVAAKHLRYLPLPLTSSCISHLLNCLLGTAFNAKPTAEIDPSIRSLYDDADLAFENVTPEILRTAIQEEVARRFRYTLASDWYNNLPHLHMLREVCLKLGIQMQHKEFIFTAEGAASQPAPVPVTNGNGNAPAEGSKKNKKKKKAARDTSPDSVTSSSTIPHTFVPDDIINVVPIVKDSSPRSVLAEEALEAGRISILQNQRKIGQELLLESLSLHEQIYGILHPEVARVYHSLAMLYFQLEEKDAAVELARKAVIVAERTIGVDSQETLLDYLNLSLFLYQLGDSKQALEFTKHALNMWKIIYGPDHPDMITTINNAAVMLQQLKEYHESRRWFEEALRICEVVFGRQSVNSATLLFQLAQALALDQEPKAAVVKMKESYNIFLAELGPEDKNTKEAEGWLEQLTTNAVSIAKHAKDVEERRLRAGIRFTPRAGAIGSTSTAANKVAKSEIERPAAASSMDSRSIDELLKFIEGTDKQKKPAAKKRTGRANPKRRGAEPVSTKA.

Residues 1-18 (MAEKTNGAAAPNGAADAP) show a composition bias toward low complexity. A disordered region spans residues 1–27 (MAEKTNGAAAPNGAADAPKSSPEQAQD). Residues 324 to 568 (DITRTQESFL…RITPLDVSWQ (245 aa)) enclose the Clu domain. Residues 491–525 (IDYGAVDGKDLVATDERFVPQFQKLSKALKVKPHA) form a TPR 1 repeat. The span at 606–630 (SEVAKRGQAKKDQAAVEEKKEAKAE) shows a compositional bias: basic and acidic residues. Disordered regions lie at residues 606–694 (SEVA…SSDR) and 925–966 (PAPV…SSTI). A compositionally biased stretch (acidic residues) spans 631–661 (SEEDSDSSSEEESSSDESDSEESSSDEDEEE). A compositionally biased stretch (basic residues) spans 665 to 675 (PKKKSVPKKAA). Positions 676 to 694 (KKEEVKEEKKDEKEASSDR) are enriched in basic and acidic residues. TPR repeat units follow at residues 1034-1067 (ARVYHSLAMLYFQLEEKDAAVELARKAVIVAERT), 1076-1109 (LLDYLNLSLFLYQLGDSKQALEFTKHALNMWKII), and 1118-1151 (ITTINNAAVMLQQLKEYHESRRWFEEALRICEVV). Over residues 1276-1286 (LKFIEGTDKQK) the composition is skewed to basic and acidic residues. A disordered region spans residues 1276 to 1311 (LKFIEGTDKQKKPAAKKRTGRANPKRRGAEPVSTKA). Residues 1287–1301 (KPAAKKRTGRANPKR) are compositionally biased toward basic residues.

This sequence belongs to the CLU family. In terms of assembly, may associate with the eukaryotic translation initiation factor 3 (eIF-3) complex.

Its subcellular location is the cytoplasm. Its function is as follows. mRNA-binding protein involved in proper cytoplasmic distribution of mitochondria. The polypeptide is Clustered mitochondria protein homolog (Pyricularia oryzae (strain 70-15 / ATCC MYA-4617 / FGSC 8958) (Rice blast fungus)).